The following is a 113-amino-acid chain: DNA-binding protein Mevan_1162 (113 aa).

The span at 1 to 12 (MDPEEIKQKKLQ) shows a compositional bias: basic and acidic residues. Residues 1 to 22 (MDPEEIKQKKLQEMQAKAQDPE) are disordered.

It belongs to the PDCD5 family.

This chain is DNA-binding protein Mevan_1162, found in Methanococcus vannielii (strain ATCC 35089 / DSM 1224 / JCM 13029 / OCM 148 / SB).